A 610-amino-acid polypeptide reads, in one-letter code: Glutamine--fructose-6-phosphate aminotransferase [isomerizing] (610 aa).

Catalysis depends on Cys-2, which acts as the Nucleophile; for GATase activity. One can recognise a Glutamine amidotransferase type-2 domain in the interval 2-218; it reads CGIVGAVAQR…EGDVAEITRR (217 aa). 2 consecutive SIS domains span residues 286–426 and 459–600; these read AVEI…QQNR and LAPD…VDQP. The For Fru-6P isomerization activity role is filled by Lys-605.

Homodimer.

It localises to the cytoplasm. It carries out the reaction D-fructose 6-phosphate + L-glutamine = D-glucosamine 6-phosphate + L-glutamate. Functionally, catalyzes the first step in hexosamine metabolism, converting fructose-6P into glucosamine-6P using glutamine as a nitrogen source. This is Glutamine--fructose-6-phosphate aminotransferase [isomerizing] from Aliivibrio fischeri (strain ATCC 700601 / ES114) (Vibrio fischeri).